The chain runs to 220 residues: Apoptosis regulator BALF1 (220 aa).

Belongs to the Epstein-Barr virus BALF1 family. In terms of assembly, interacts with BHRF1; this interaction modulates BHRF1 activity. Interacts with host BAX and BAK1.

It is found in the host cytoplasm. Its function is as follows. Modulates the antiapoptotic activity of the viral protein BHRF1. May also play an active part in oncogenesis in Burkitt's lymphomy and nasopharyngeal carcinoma. This is Apoptosis regulator BALF1 from Homo sapiens (Human).